The following is a 216-amino-acid chain: UPF0598 protein C8orf82 (216 aa).

The protein belongs to the UPF0598 family.

This Homo sapiens (Human) protein is UPF0598 protein C8orf82 (C8orf82).